A 553-amino-acid polypeptide reads, in one-letter code: Putative transport protein CKO_00031 (553 aa).

5 helical membrane-spanning segments follow: residues Ile-4–Ile-24, Gly-28–Asp-48, Phe-65–Ser-85, Leu-95–Phe-115, and Met-158–Met-178. RCK C-terminal domains are found at residues Gln-192 to Gln-276 and Asp-279 to Asn-361. The next 6 membrane-spanning stretches (helical) occupy residues Met-371 to Val-391, Gly-393 to Leu-413, Leu-437 to Thr-457, Leu-464 to Leu-484, Tyr-493 to Ala-513, and Leu-533 to Gly-553.

The protein belongs to the AAE transporter (TC 2.A.81) family. YidE subfamily.

The protein resides in the cell membrane. This Citrobacter koseri (strain ATCC BAA-895 / CDC 4225-83 / SGSC4696) protein is Putative transport protein CKO_00031.